A 502-amino-acid polypeptide reads, in one-letter code: Probable malate:quinone oxidoreductase (502 aa).

Belongs to the MQO family. It depends on FAD as a cofactor.

It carries out the reaction (S)-malate + a quinone = a quinol + oxaloacetate. It participates in carbohydrate metabolism; tricarboxylic acid cycle; oxaloacetate from (S)-malate (quinone route): step 1/1. This is Probable malate:quinone oxidoreductase from Parasynechococcus marenigrum (strain WH8102).